The chain runs to 273 residues: Peptide deformylase 1B, chloroplastic/mitochondrial (273 aa).

The N-terminal 56 residues, 1-56 (MAVCNCFLQAPPLSRILLPVLSRRATTLSAGYGRLKSTVTFCSTVNRTSPLTSSVR), are a transit peptide targeting the chloroplast and mitochondrion. Fe cation-binding residues include cysteine 171 and histidine 213. Residue glutamate 214 is part of the active site. A Fe cation-binding site is contributed by histidine 217. A compositionally biased stretch (basic and acidic residues) spans 246–261 (YEEKTGLPSPERVEAR). The interval 246 to 273 (YEEKTGLPSPERVEARQKRKAGVGFGKR) is disordered. The segment covering 262–273 (QKRKAGVGFGKR) has biased composition (basic residues).

It belongs to the polypeptide deformylase family. Homodimer. It depends on Fe(2+) as a cofactor. As to expression, expressed in leaves and flowers.

It localises to the plastid. The protein localises to the chloroplast stroma. It is found in the mitochondrion. The catalysed reaction is N-terminal N-formyl-L-methionyl-[peptide] + H2O = N-terminal L-methionyl-[peptide] + formate. Its activity is regulated as follows. Inhibited by actinonin. Removes the formyl group from the N-terminal Met of newly synthesized proteins. Has a preferred substrate specificity towards the photosystem II (PS II) D1 polypeptide. This is Peptide deformylase 1B, chloroplastic/mitochondrial (PDF1B) from Arabidopsis thaliana (Mouse-ear cress).